Here is a 419-residue protein sequence, read N- to C-terminus: CCA-adding enzyme (419 aa).

Residues G8 and R11 each coordinate ATP. Residues G8 and R11 each contribute to the CTP site. Residues D21 and D23 each contribute to the Mg(2+) site. ATP contacts are provided by R91, R137, and R140. CTP-binding residues include R91, R137, and R140.

It belongs to the tRNA nucleotidyltransferase/poly(A) polymerase family. Bacterial CCA-adding enzyme type 2 subfamily. Requires Mg(2+) as cofactor.

The catalysed reaction is a tRNA precursor + 2 CTP + ATP = a tRNA with a 3' CCA end + 3 diphosphate. It catalyses the reaction a tRNA with a 3' CCA end + 2 CTP + ATP = a tRNA with a 3' CCACCA end + 3 diphosphate. In terms of biological role, catalyzes the addition and repair of the essential 3'-terminal CCA sequence in tRNAs without using a nucleic acid template. Adds these three nucleotides in the order of C, C, and A to the tRNA nucleotide-73, using CTP and ATP as substrates and producing inorganic pyrophosphate. tRNA 3'-terminal CCA addition is required both for tRNA processing and repair. Also involved in tRNA surveillance by mediating tandem CCA addition to generate a CCACCA at the 3' terminus of unstable tRNAs. While stable tRNAs receive only 3'-terminal CCA, unstable tRNAs are marked with CCACCA and rapidly degraded. This is CCA-adding enzyme from Buchnera aphidicola subsp. Baizongia pistaciae (strain Bp).